We begin with the raw amino-acid sequence, 222 residues long: DUF1769 family protein (222 aa).

The protein belongs to the UPF0590 family.

The protein localises to the cytoplasm. It is found in the nucleus. The polypeptide is DUF1769 family protein (Schizosaccharomyces pombe (strain 972 / ATCC 24843) (Fission yeast)).